We begin with the raw amino-acid sequence, 473 residues long: MSKPVITRFAPSPTGYLHIGGARTALFNWLYAKHCGGKMLLRIEDTDRERSTEAATAAILDGLTWLGLDWDGEAISQFERAPRHREVAEELVANGKAYYCYASPEELEEMREKARAEGRPPRYDGRWRDRDPSEAPAGVKPVIRIKAPRDGETVVHDAVQGDVRFPNKDLDDFIILRSDGTPTYMHAVVVDDHDMGVTHIIRGDDHLTNAARQTIIYNAMGWDVPQMSHIPLIHGADGAKLSKRHGALGVDAYRAMGYLPAALRNYLVRLGWSHGDDEIMSTEQMIEWFDVKDINKGAARFDFQKLEAINGLYMRSSDDQALFDALVAVLPEIEGGKELAEALDDKGRAQLLLAMPGLKERAKTLVELADGAKFIFASRPLALDEKAASLLNDEGRAVLKPVYPVLEAVGEWTAESLDAAIRAHAEAEGLKLGKIAQPLRAALTGRATSPGVFDVLVVLGREESLARIGDQIG.

Residues 11-21 (PSPTGYLHIGG) carry the 'HIGH' region motif. Positions 113–133 (KARAEGRPPRYDGRWRDRDPS) are enriched in basic and acidic residues. A disordered region spans residues 113-136 (KARAEGRPPRYDGRWRDRDPSEAP). The 'KMSKS' region signature appears at 240–244 (KLSKR). Lys243 serves as a coordination point for ATP.

The protein belongs to the class-I aminoacyl-tRNA synthetase family. Glutamate--tRNA ligase type 1 subfamily. Monomer.

The protein resides in the cytoplasm. It carries out the reaction tRNA(Glu) + L-glutamate + ATP = L-glutamyl-tRNA(Glu) + AMP + diphosphate. Its function is as follows. Catalyzes the attachment of glutamate to tRNA(Glu) in a two-step reaction: glutamate is first activated by ATP to form Glu-AMP and then transferred to the acceptor end of tRNA(Glu). The sequence is that of Glutamate--tRNA ligase 2 from Brucella canis (strain ATCC 23365 / NCTC 10854 / RM-666).